We begin with the raw amino-acid sequence, 616 residues long: Dihydroxy-acid dehydratase (616 aa).

A Mg(2+)-binding site is contributed by aspartate 81. Cysteine 122 provides a ligand contact to [2Fe-2S] cluster. Positions 123 and 124 each coordinate Mg(2+). An N6-carboxylysine modification is found at lysine 124. Cysteine 195 is a binding site for [2Fe-2S] cluster. Glutamate 491 lines the Mg(2+) pocket. The active-site Proton acceptor is the serine 517.

It belongs to the IlvD/Edd family. In terms of assembly, homodimer. Requires [2Fe-2S] cluster as cofactor. Mg(2+) serves as cofactor.

It catalyses the reaction (2R)-2,3-dihydroxy-3-methylbutanoate = 3-methyl-2-oxobutanoate + H2O. The catalysed reaction is (2R,3R)-2,3-dihydroxy-3-methylpentanoate = (S)-3-methyl-2-oxopentanoate + H2O. The protein operates within amino-acid biosynthesis; L-isoleucine biosynthesis; L-isoleucine from 2-oxobutanoate: step 3/4. It participates in amino-acid biosynthesis; L-valine biosynthesis; L-valine from pyruvate: step 3/4. Its function is as follows. Functions in the biosynthesis of branched-chain amino acids. Catalyzes the dehydration of (2R,3R)-2,3-dihydroxy-3-methylpentanoate (2,3-dihydroxy-3-methylvalerate) into 2-oxo-3-methylpentanoate (2-oxo-3-methylvalerate) and of (2R)-2,3-dihydroxy-3-methylbutanoate (2,3-dihydroxyisovalerate) into 2-oxo-3-methylbutanoate (2-oxoisovalerate), the penultimate precursor to L-isoleucine and L-valine, respectively. The chain is Dihydroxy-acid dehydratase from Salmonella heidelberg (strain SL476).